The primary structure comprises 122 residues: Large ribosomal subunit protein uL14 (122 aa).

It belongs to the universal ribosomal protein uL14 family. In terms of assembly, part of the 50S ribosomal subunit. Forms a cluster with proteins L3 and L19. In the 70S ribosome, L14 and L19 interact and together make contacts with the 16S rRNA in bridges B5 and B8.

Binds to 23S rRNA. Forms part of two intersubunit bridges in the 70S ribosome. This chain is Large ribosomal subunit protein uL14, found in Lactobacillus delbrueckii subsp. bulgaricus (strain ATCC BAA-365 / Lb-18).